The chain runs to 184 residues: Holliday junction branch migration complex subunit RuvA (184 aa).

The segment at 1 to 64 (MIKAIEGVVT…EDANLLYGFL (64 aa)) is domain I. The segment at 65-134 (DANEQKMFEM…IAELSDTKLI (70 aa)) is domain II. Positions 134–137 (ISDE) are flexible linker. A domain III region spans residues 138-184 (SVPSYQNEALLALEALGFKREKIVKILPDCKSENTSDLIKEALKKLG).

This sequence belongs to the RuvA family. In terms of assembly, homotetramer. Forms an RuvA(8)-RuvB(12)-Holliday junction (HJ) complex. HJ DNA is sandwiched between 2 RuvA tetramers; dsDNA enters through RuvA and exits via RuvB. An RuvB hexamer assembles on each DNA strand where it exits the tetramer. Each RuvB hexamer is contacted by two RuvA subunits (via domain III) on 2 adjacent RuvB subunits; this complex drives branch migration. In the full resolvosome a probable DNA-RuvA(4)-RuvB(12)-RuvC(2) complex forms which resolves the HJ.

It localises to the cytoplasm. In terms of biological role, the RuvA-RuvB-RuvC complex processes Holliday junction (HJ) DNA during genetic recombination and DNA repair, while the RuvA-RuvB complex plays an important role in the rescue of blocked DNA replication forks via replication fork reversal (RFR). RuvA specifically binds to HJ cruciform DNA, conferring on it an open structure. The RuvB hexamer acts as an ATP-dependent pump, pulling dsDNA into and through the RuvAB complex. HJ branch migration allows RuvC to scan DNA until it finds its consensus sequence, where it cleaves and resolves the cruciform DNA. In Campylobacter concisus (strain 13826), this protein is Holliday junction branch migration complex subunit RuvA.